The primary structure comprises 126 residues: MSSTYKDLDKIFLIGAGGFLGAICRFSLCELMESYYGTLSVNVLGSFMLGLIMYDTEYIGFIGPKGKLAFGTGFMGAFTTFSTFAVQSFTMPFFPALENISVNLFLALVGVFMGRSTIKALSGREV.

4 helical membrane-spanning segments follow: residues 11–31 (IFLIGAGGFLGAICRFSLCEL), 43–63 (VLGSFMLGLIMYDTEYIGFIG), 69–89 (AFGTGFMGAFTTFSTFAVQSF), and 93–113 (FFPALENISVNLFLALVGVFM). 2 residues coordinate Na(+): Gly-76 and Thr-79.

This sequence belongs to the fluoride channel Fluc/FEX (TC 1.A.43) family.

It localises to the cell membrane. The catalysed reaction is fluoride(in) = fluoride(out). Its activity is regulated as follows. Na(+) is not transported, but it plays an essential structural role and its presence is essential for fluoride channel function. Functionally, fluoride-specific ion channel. Important for reducing fluoride concentration in the cell, thus reducing its toxicity. The chain is Fluoride-specific ion channel FluC 2 from Methanosarcina barkeri (strain Fusaro / DSM 804).